Reading from the N-terminus, the 269-residue chain is tRNA pseudouridine synthase A (269 aa).

D55 acts as the Nucleophile in catalysis. Substrate is bound at residue Y111.

This sequence belongs to the tRNA pseudouridine synthase TruA family.

It catalyses the reaction uridine(38/39/40) in tRNA = pseudouridine(38/39/40) in tRNA. Functionally, formation of pseudouridine at positions 38, 39 and 40 in the anticodon stem and loop of transfer RNAs. The polypeptide is tRNA pseudouridine synthase A (Methanosarcina acetivorans (strain ATCC 35395 / DSM 2834 / JCM 12185 / C2A)).